A 192-amino-acid chain; its full sequence is Glycerol-3-phosphate acyltransferase (192 aa).

Helical transmembrane passes span 4–24, 48–68, 74–94, 101–121, and 125–145; these read FAII…DVVI, LVLV…WVGY, YFEL…PIFF, GVAT…GSML, and LLIF…ALIL.

The protein belongs to the PlsY family. As to quaternary structure, probably interacts with PlsX.

It is found in the cell inner membrane. It carries out the reaction an acyl phosphate + sn-glycerol 3-phosphate = a 1-acyl-sn-glycero-3-phosphate + phosphate. The protein operates within lipid metabolism; phospholipid metabolism. Functionally, catalyzes the transfer of an acyl group from acyl-phosphate (acyl-PO(4)) to glycerol-3-phosphate (G3P) to form lysophosphatidic acid (LPA). This enzyme utilizes acyl-phosphate as fatty acyl donor, but not acyl-CoA or acyl-ACP. In Histophilus somni (strain 129Pt) (Haemophilus somnus), this protein is Glycerol-3-phosphate acyltransferase.